We begin with the raw amino-acid sequence, 96 residues long: Co-chaperonin GroES (96 aa).

It belongs to the GroES chaperonin family. Heptamer of 7 subunits arranged in a ring. Interacts with the chaperonin GroEL.

The protein localises to the cytoplasm. Its function is as follows. Together with the chaperonin GroEL, plays an essential role in assisting protein folding. The GroEL-GroES system forms a nano-cage that allows encapsulation of the non-native substrate proteins and provides a physical environment optimized to promote and accelerate protein folding. GroES binds to the apical surface of the GroEL ring, thereby capping the opening of the GroEL channel. This chain is Co-chaperonin GroES, found in Methylobacterium radiotolerans (strain ATCC 27329 / DSM 1819 / JCM 2831 / NBRC 15690 / NCIMB 10815 / 0-1).